Reading from the N-terminus, the 25-residue chain is M-poneritoxin-Ng1a (25 aa).

Expressed by the venom gland.

It localises to the secreted. It is found in the target cell membrane. Has a broad spectrum of activity against both Gram-positive and Gram-negative bacteria and S.cerevisiae. Has insecticidal and hemolytic activities. May act by disrupting the integrity of the bacterial cell membrane. This Neoponera goeldii (Ponerine ant) protein is M-poneritoxin-Ng1a.